We begin with the raw amino-acid sequence, 148 residues long: MEQTFIMIKPDGVQRGLVGEIIGRFEKKGFTLKGLKLLTVDQAFAEKHYADLSAKPFFNGLVEYIISGPVVAMVWEGKNVVTTGRKIIGATNPAESPPGTIRGDFAIDIGRNVIHGSDAVESAKKEIGLWFPEGVANWSSSLHPWIYE.

ATP contacts are provided by lysine 9, phenylalanine 57, arginine 85, threonine 91, arginine 102, and asparagine 112. Residue histidine 115 is the Pros-phosphohistidine intermediate of the active site.

It belongs to the NDK family. Mg(2+) is required as a cofactor.

The catalysed reaction is a 2'-deoxyribonucleoside 5'-diphosphate + ATP = a 2'-deoxyribonucleoside 5'-triphosphate + ADP. The enzyme catalyses a ribonucleoside 5'-diphosphate + ATP = a ribonucleoside 5'-triphosphate + ADP. Major role in the synthesis of nucleoside triphosphates other than ATP. The ATP gamma phosphate is transferred to the NDP beta phosphate via a ping-pong mechanism, using a phosphorylated active-site intermediate. This Helianthus annuus (Common sunflower) protein is Nucleoside diphosphate kinase.